Reading from the N-terminus, the 125-residue chain is Large ribosomal subunit protein bL12 (125 aa).

The protein belongs to the bacterial ribosomal protein bL12 family. As to quaternary structure, homodimer. Part of the ribosomal stalk of the 50S ribosomal subunit. Forms a multimeric L10(L12)X complex, where L10 forms an elongated spine to which 2 to 4 L12 dimers bind in a sequential fashion. Binds GTP-bound translation factors.

In terms of biological role, forms part of the ribosomal stalk which helps the ribosome interact with GTP-bound translation factors. Is thus essential for accurate translation. The polypeptide is Large ribosomal subunit protein bL12 (Rickettsia africae (strain ESF-5)).